We begin with the raw amino-acid sequence, 312 residues long: Olfactory receptor 2L3 (312 aa).

The Extracellular segment spans residues 1-24 (MENYNQTSTDFILLGFFPPSRIGL). N5 carries an N-linked (GlcNAc...) asparagine glycan. A helical transmembrane segment spans residues 25–48 (FLFILIVFIFLMALIGNLSMILLI). The Cytoplasmic portion of the chain corresponds to 49-56 (FLDTHLHT). A helical transmembrane segment spans residues 57–78 (PMYFLLSQLSLIDLNYISTIVP). At 79–99 (KMASDFLSGNKSISFTGCGIQ) the chain is on the extracellular side. An N-linked (GlcNAc...) asparagine glycan is attached at N88. C96 and C188 form a disulfide bridge. A helical transmembrane segment spans residues 100-119 (SFFFSALGGAEALLLASMAY). Topologically, residues 120 to 138 (DRYIAICFPLHYPIRMSKR) are cytoplasmic. Residues 139–157 (MCVLMITGSWIIGSINACA) traverse the membrane as a helical segment. The Extracellular portion of the chain corresponds to 158–194 (HTVYVLHIPYCQSRAINHFFCDVPAMVTLACMDTWVY). The chain crosses the membrane as a helical span at residues 195–218 (EGTVFLSTTIFLVFPFIAISCSYG). Over 219-235 (RVLLAVYHMKSAEGRKK) the chain is Cytoplasmic. The chain crosses the membrane as a helical span at residues 236-258 (AYLTCSTHLTVVTFYYAPFVYTY). At 259–271 (LRPRSLRSPTEDK) the chain is on the extracellular side. Residues 272-291 (VLAVFYTTLTPMLNPIIYSL) traverse the membrane as a helical segment. Residues 292 to 312 (RNKEVMGALTRVSQRICSGKM) are Cytoplasmic-facing.

The protein belongs to the G-protein coupled receptor 1 family.

The protein localises to the cell membrane. Odorant receptor. This is Olfactory receptor 2L3 (OR2L3) from Homo sapiens (Human).